Here is a 514-residue protein sequence, read N- to C-terminus: ATP synthase subunit alpha 2 (514 aa).

170 to 177 provides a ligand contact to ATP; that stretch reads GDRQTGKT.

Belongs to the ATPase alpha/beta chains family. F-type ATPases have 2 components, CF(1) - the catalytic core - and CF(0) - the membrane proton channel. CF(1) has five subunits: alpha(3), beta(3), gamma(1), delta(1), epsilon(1). CF(0) has three main subunits: a(1), b(2) and c(9-12). The alpha and beta chains form an alternating ring which encloses part of the gamma chain. CF(1) is attached to CF(0) by a central stalk formed by the gamma and epsilon chains, while a peripheral stalk is formed by the delta and b chains.

Its subcellular location is the cell inner membrane. It carries out the reaction ATP + H2O + 4 H(+)(in) = ADP + phosphate + 5 H(+)(out). Produces ATP from ADP in the presence of a proton gradient across the membrane. The alpha chain is a regulatory subunit. The chain is ATP synthase subunit alpha 2 from Hahella chejuensis (strain KCTC 2396).